Here is a 490-residue protein sequence, read N- to C-terminus: Protein nucleotidyltransferase YdiU (490 aa).

Residues Gly94, Gly96, Arg97, Lys117, Asp129, Gly130, Arg180, and Arg187 each contribute to the ATP site. The active-site Proton acceptor is Asp256. Residues Asn257 and Asp266 each contribute to the Mg(2+) site. Residue Asp266 participates in ATP binding.

Belongs to the SELO family. Mg(2+) serves as cofactor. It depends on Mn(2+) as a cofactor.

The catalysed reaction is L-seryl-[protein] + ATP = 3-O-(5'-adenylyl)-L-seryl-[protein] + diphosphate. It catalyses the reaction L-threonyl-[protein] + ATP = 3-O-(5'-adenylyl)-L-threonyl-[protein] + diphosphate. It carries out the reaction L-tyrosyl-[protein] + ATP = O-(5'-adenylyl)-L-tyrosyl-[protein] + diphosphate. The enzyme catalyses L-histidyl-[protein] + UTP = N(tele)-(5'-uridylyl)-L-histidyl-[protein] + diphosphate. The catalysed reaction is L-seryl-[protein] + UTP = O-(5'-uridylyl)-L-seryl-[protein] + diphosphate. It catalyses the reaction L-tyrosyl-[protein] + UTP = O-(5'-uridylyl)-L-tyrosyl-[protein] + diphosphate. Its function is as follows. Nucleotidyltransferase involved in the post-translational modification of proteins. It can catalyze the addition of adenosine monophosphate (AMP) or uridine monophosphate (UMP) to a protein, resulting in modifications known as AMPylation and UMPylation. In Clostridium beijerinckii (strain ATCC 51743 / NCIMB 8052) (Clostridium acetobutylicum), this protein is Protein nucleotidyltransferase YdiU.